The sequence spans 554 residues: Glucose-6-phosphate isomerase (554 aa).

Glutamate 359 (proton donor) is an active-site residue. Active-site residues include histidine 390 and lysine 518.

The protein belongs to the GPI family.

Its subcellular location is the cytoplasm. It catalyses the reaction alpha-D-glucose 6-phosphate = beta-D-fructose 6-phosphate. It functions in the pathway carbohydrate biosynthesis; gluconeogenesis. Its pathway is carbohydrate degradation; glycolysis; D-glyceraldehyde 3-phosphate and glycerone phosphate from D-glucose: step 2/4. In terms of biological role, catalyzes the reversible isomerization of glucose-6-phosphate to fructose-6-phosphate. The sequence is that of Glucose-6-phosphate isomerase from Pseudomonas fluorescens (strain Pf0-1).